The chain runs to 315 residues: uncharacterized protein (315 aa).

The protein belongs to the carbohydrate kinase PfkB family.

This is an uncharacterized protein from Escherichia coli (strain K12).